Here is a 302-residue protein sequence, read N- to C-terminus: MKQLVSMEDLTNEEIYSLIETAIEYKKGNKPNKFTDKYVSNLFFENSTRTKCSFEMAERQLGLQEIPFETSTSSVKKGESLYDTCKTLESIGVDALVIRHPQNDYYKELEGLNIPVINGGDGSGQHPTQSLLDIMTIYEEYKDFKDLNVLICGDIKNSRVARSNYQALTALGANVKFAAPGEWVDESLDAPYVKIDDVIEETDIVMLLRVQHERHDGELSFDPHEYHEKYGLTKDRYNRMKSEAIVMHPAPVNRGVEIDSDLVEAPKARIFKQMKNGMFLRMSVITHILAEKEEGVIFDVAN.

Carbamoyl phosphate contacts are provided by arginine 49 and threonine 50. Lysine 77 serves as a coordination point for L-aspartate. Residues arginine 99, histidine 126, and glutamine 129 each coordinate carbamoyl phosphate. The L-aspartate site is built by arginine 159 and arginine 209. Residues alanine 250 and proline 251 each coordinate carbamoyl phosphate.

It belongs to the aspartate/ornithine carbamoyltransferase superfamily. ATCase family. Heterododecamer (2C3:3R2) of six catalytic PyrB chains organized as two trimers (C3), and six regulatory PyrI chains organized as three dimers (R2).

The catalysed reaction is carbamoyl phosphate + L-aspartate = N-carbamoyl-L-aspartate + phosphate + H(+). Its pathway is pyrimidine metabolism; UMP biosynthesis via de novo pathway; (S)-dihydroorotate from bicarbonate: step 2/3. In terms of biological role, catalyzes the condensation of carbamoyl phosphate and aspartate to form carbamoyl aspartate and inorganic phosphate, the committed step in the de novo pyrimidine nucleotide biosynthesis pathway. In Staphylococcus carnosus (strain TM300), this protein is Aspartate carbamoyltransferase catalytic subunit.